The primary structure comprises 505 residues: MEKLKKNKKKLIWQQRFLYPLLFQNDFYALAYNHSLNKFNLKKIENSNLNKHFSFLTLKRLVKRIRRKRNIEELNKNYNKIFDINYNNYFYSKVIREGLAIILENFFLVQSKKKIVKKFTEWTNYQSIHTVFPFIEDNFLHSNYILNTKIPSLIHPELLIRILRRRIQDASFSHLLRLIFHKNKKLVTLNIFSQREITKLSIFLWHSYIYELEFFLVNQWKTLNYFKSLSYLISLNKTYCITKIQHVIKKPLDIKLQFFYKKKMSFHYVRYENHFIIAIKNSNFLAEKWKFFFYKFWQYYFYYLFKLSRINLKKISKNCFSFLGYVFGIQTKSIIVKSNMIHTLSKINISRKEIYSITPISSLIELLAKENFCDTLGHPISKLAWTTLTDDEIFNRFDQIWRNFFYYYSGCKNKKNLYQVQYILRFSCAKTLACKHKSTIRYVWKKYGSNFFAKSFFFKKQELISLKFFKLYPSIKKIWYLNILQINALAKLLQKKILKTNRLNI.

Belongs to the intron maturase 2 family. MatK subfamily.

Its subcellular location is the plastid. The protein resides in the chloroplast. Usually encoded in the trnK tRNA gene intron. Probably assists in splicing its own and other chloroplast group II introns. This Physcomitrium patens (Spreading-leaved earth moss) protein is Maturase K.